The chain runs to 62 residues: Photosystem II reaction center protein Z (62 aa).

Helical transmembrane passes span Ala8 to Ala28 and Tyr41 to Val61.

The protein belongs to the PsbZ family. As to quaternary structure, PSII is composed of 1 copy each of membrane proteins PsbA, PsbB, PsbC, PsbD, PsbE, PsbF, PsbH, PsbI, PsbJ, PsbK, PsbL, PsbM, PsbT, PsbX, PsbY, PsbZ, Psb30/Ycf12, peripheral proteins PsbO, CyanoQ (PsbQ), PsbU, PsbV and a large number of cofactors. It forms dimeric complexes.

The protein resides in the cellular thylakoid membrane. May control the interaction of photosystem II (PSII) cores with the light-harvesting antenna, regulates electron flow through the 2 photosystem reaction centers. PSII is a light-driven water plastoquinone oxidoreductase, using light energy to abstract electrons from H(2)O, generating a proton gradient subsequently used for ATP formation. This Rippkaea orientalis (strain PCC 8801 / RF-1) (Cyanothece sp. (strain PCC 8801)) protein is Photosystem II reaction center protein Z.